We begin with the raw amino-acid sequence, 284 residues long: Efem/EfeO family lipoprotein (284 aa).

The N-terminal stretch at 1–17 is a signal peptide; sequence MKKLTTLLLASTLLIAA. Cys18 carries the N-palmitoyl cysteine lipid modification. Residue Cys18 is the site of S-diacylglycerol cysteine attachment.

The protein belongs to the EfeM/EfeO family.

The protein localises to the cell membrane. In Staphylococcus aureus (strain USA300), this protein is Efem/EfeO family lipoprotein.